The sequence spans 513 residues: 2-isopropylmalate synthase (513 aa).

Residues L5–V268 form the Pyruvate carboxyltransferase domain. Positions 14, 202, 204, and 239 each coordinate Mn(2+). Residues R394–G513 are regulatory domain.

The protein belongs to the alpha-IPM synthase/homocitrate synthase family. LeuA type 1 subfamily. Homodimer. Mn(2+) serves as cofactor.

Its subcellular location is the cytoplasm. The enzyme catalyses 3-methyl-2-oxobutanoate + acetyl-CoA + H2O = (2S)-2-isopropylmalate + CoA + H(+). The protein operates within amino-acid biosynthesis; L-leucine biosynthesis; L-leucine from 3-methyl-2-oxobutanoate: step 1/4. Functionally, catalyzes the condensation of the acetyl group of acetyl-CoA with 3-methyl-2-oxobutanoate (2-ketoisovalerate) to form 3-carboxy-3-hydroxy-4-methylpentanoate (2-isopropylmalate). This is 2-isopropylmalate synthase from Methylibium petroleiphilum (strain ATCC BAA-1232 / LMG 22953 / PM1).